Reading from the N-terminus, the 158-residue chain is MKCPYCGYPDSRVIDSRPTDDNTAIRRRRECLKCGKRFTTYEKVEQLPILVIKKDNRRELYDKEKILRGMIKACEKRPVPIKVLEEITDEIDRKIVNSMVREITSAEIGEMVMEKLKSVDEVAYVRFASVYRQFKDINTFMDELKKLLKENEEKKQKE.

Residues 3–34 fold into a zinc finger; sequence CPYCGYPDSRVIDSRPTDDNTAIRRRRECLKC. An ATP-cone domain is found at 49–139; sequence ILVIKKDNRR…VYRQFKDINT (91 aa).

This sequence belongs to the NrdR family. Requires Zn(2+) as cofactor.

Negatively regulates transcription of bacterial ribonucleotide reductase nrd genes and operons by binding to NrdR-boxes. This is Transcriptional repressor NrdR from Caldanaerobacter subterraneus subsp. tengcongensis (strain DSM 15242 / JCM 11007 / NBRC 100824 / MB4) (Thermoanaerobacter tengcongensis).